The sequence spans 499 residues: MINKKISLGVLSILTAFSLQSVSYACTGFIIGKDLTKDGSLLXGRTEDLEPHHNKNFIVRLAKDNPAGEKWKDLSNGFEYPLPEHSYRYSAIPDVTPNKGVYDEAGFNECGVSMSATVSASANDAIQKIDPYVKNGLAESSMASVILPSVKTAREGVALIAKIVTEKGAAEGNIVTLADKDGIWYMEILSGHQYVAIKFPDDKYAVFPNTFYLGHVDFNDKENTIASEDVEKVAKKAKSYIEVDGKFHIAKSYNPPLNDANRSRSFSGIKSLDPDSKVTYKDSNYELLQSTDKTFSLEDAMKLQRNRFEGLDLKPLDQMALDGKGKPKSKKAVKGYAYPISNPNVMEAHIFQLKKDIPAELGGGVMWLSIGSPRNAPYLPYLGNISRTYEAYQEKSTQYNDKSWYWTVSHINDLVAAHPKPFGTKVIDEIKGLEKTWIAEQDKTTKEISDLVVSDPKAAQEKADKISLDRAEKTFKRLKAIEAKLVKEKPKNKKGLNRS.

Cysteine 26 is a catalytic residue.

Belongs to the peptidase C69 family.

The enzyme catalyses an L-aminoacyl-L-amino acid + H2O = 2 an L-alpha-amino acid. This chain is Probable dipeptidase B (pepDB), found in Streptococcus pyogenes serotype M6 (strain ATCC BAA-946 / MGAS10394).